A 119-amino-acid chain; its full sequence is Large ribosomal subunit protein bL20 (119 aa).

This sequence belongs to the bacterial ribosomal protein bL20 family.

In terms of biological role, binds directly to 23S ribosomal RNA and is necessary for the in vitro assembly process of the 50S ribosomal subunit. It is not involved in the protein synthesizing functions of that subunit. This Anoxybacillus flavithermus (strain DSM 21510 / WK1) protein is Large ribosomal subunit protein bL20.